The following is a 246-amino-acid chain: MQSDMTSRSEKLHVGIIMDGNGRWATRRGLSRLRGHEAGVETIRRIVEAAPKQGIGTLTLYAFSTDNWRRPKAEVAALMTLLRFYLANEVQSLVKNGVRLTVIGRRDRLPDGIANAIARAEAATAHGSTLHLRIAVDYSARDAILNAAAKAAALTSLTREAFSQLVTGEAGLRDVDLIIRTSGEKRLSDFLLWEGAYAELHFTERMWPEFDAGDLAEALAAFHGRERRFGGLQAIMPEEVPSLSRV.

Aspartate 19 is an active-site residue. Mg(2+) is bound at residue aspartate 19. Substrate contacts are provided by residues 20-23 (GNGR), tryptophan 24, arginine 32, histidine 36, and 64-66 (STD). Residue asparagine 67 is the Proton acceptor of the active site. Substrate contacts are provided by residues tryptophan 68, arginine 70, arginine 180, and 186 to 188 (RLS). Mg(2+) is bound at residue glutamate 199.

It belongs to the UPP synthase family. As to quaternary structure, homodimer. Mg(2+) is required as a cofactor.

In terms of biological role, catalyzes the condensation of isopentenyl diphosphate (IPP) with allylic pyrophosphates generating different type of terpenoids. The polypeptide is Isoprenyl transferase 1 (Bradyrhizobium diazoefficiens (strain JCM 10833 / BCRC 13528 / IAM 13628 / NBRC 14792 / USDA 110)).